Here is a 205-residue protein sequence, read N- to C-terminus: Thiamine-phosphate synthase (205 aa).

4-amino-2-methyl-5-(diphosphooxymethyl)pyrimidine is bound by residues 35 to 39 (QYRDK) and N67. Mg(2+)-binding residues include D68 and D86. Residue T105 coordinates 4-amino-2-methyl-5-(diphosphooxymethyl)pyrimidine. 132–134 (SLT) provides a ligand contact to 2-[(2R,5Z)-2-carboxy-4-methylthiazol-5(2H)-ylidene]ethyl phosphate. K135 lines the 4-amino-2-methyl-5-(diphosphooxymethyl)pyrimidine pocket. G162 serves as a coordination point for 2-[(2R,5Z)-2-carboxy-4-methylthiazol-5(2H)-ylidene]ethyl phosphate.

Belongs to the thiamine-phosphate synthase family. Requires Mg(2+) as cofactor.

The catalysed reaction is 2-[(2R,5Z)-2-carboxy-4-methylthiazol-5(2H)-ylidene]ethyl phosphate + 4-amino-2-methyl-5-(diphosphooxymethyl)pyrimidine + 2 H(+) = thiamine phosphate + CO2 + diphosphate. The enzyme catalyses 2-(2-carboxy-4-methylthiazol-5-yl)ethyl phosphate + 4-amino-2-methyl-5-(diphosphooxymethyl)pyrimidine + 2 H(+) = thiamine phosphate + CO2 + diphosphate. It catalyses the reaction 4-methyl-5-(2-phosphooxyethyl)-thiazole + 4-amino-2-methyl-5-(diphosphooxymethyl)pyrimidine + H(+) = thiamine phosphate + diphosphate. The protein operates within cofactor biosynthesis; thiamine diphosphate biosynthesis; thiamine phosphate from 4-amino-2-methyl-5-diphosphomethylpyrimidine and 4-methyl-5-(2-phosphoethyl)-thiazole: step 1/1. Condenses 4-methyl-5-(beta-hydroxyethyl)thiazole monophosphate (THZ-P) and 2-methyl-4-amino-5-hydroxymethyl pyrimidine pyrophosphate (HMP-PP) to form thiamine monophosphate (TMP). This Pseudomonas savastanoi pv. phaseolicola (strain 1448A / Race 6) (Pseudomonas syringae pv. phaseolicola (strain 1448A / Race 6)) protein is Thiamine-phosphate synthase.